A 270-amino-acid chain; its full sequence is MSLSLLLLLFLSHLILSAWAHGEKHLAPKGQPGPAATGRNPGGAGGSSTSGGTTSSSSSSVSSAPGASPGIRGSGSEQGSFQWSPSGRRTGSLYCRVGIGFHLQIYPDGKVNGSHEANMLSILEIFAVSQGIVGIRGVFSNKFLAMSKKGKLHASAKFTDDCKFRERFQENSYNTYASAIHRSEPAGREWYVALNKRGKAKRGCSPRVKPQHVSTHFLPRFKQLEHPELSFTVTVPEKKKPPSHVKPKVPLSAPRKSPNTVKYRLKFRFG.

A signal peptide spans 1–20 (MSLSLLLLLFLSHLILSAWA). A disordered region spans residues 26–84 (LAPKGQPGPAATGRNPGGAGGSSTSGGTTSSSSSSVSSAPGASPGIRGSGSEQGSFQWS). Residues 40–49 (NPGGAGGSST) are compositionally biased toward gly residues. Residues 50–70 (SGGTTSSSSSSVSSAPGASPG) show a composition bias toward low complexity. Residues 75 to 84 (GSEQGSFQWS) show a composition bias toward polar residues. A glycan (N-linked (GlcNAc...) asparagine) is linked at Asn112. Residues 237 to 257 (EKKKPPSHVKPKVPLSAPRKS) are disordered.

The protein belongs to the heparin-binding growth factors family. As to quaternary structure, interacts with FGFR1 and FGFR2. Affinity between fibroblast growth factors (FGFs) and their receptors is increased by heparan sulfate glycosaminoglycans that function as coreceptors.

Its subcellular location is the secreted. Its function is as follows. Plays an important role in the regulation of cell proliferation and cell differentiation. Required for normal regulation of the hair growth cycle. Functions as an inhibitor of hair elongation by promoting progression from anagen, the growth phase of the hair follicle, into catagen the apoptosis-induced regression phase. The polypeptide is Fibroblast growth factor 5 (FGF5) (Canis lupus familiaris (Dog)).